The primary structure comprises 301 residues: Tyrosine recombinase XerC (301 aa).

The region spanning 2-84 (TNTQFYITNF…TLRSFFSYLY (83 aa)) is the Core-binding (CB) domain. The Tyr recombinase domain occupies 105 to 291 (ALPKFLTVDD…DLKHLIEVYD (187 aa)). Residues R145, K169, H243, R246, and H269 contribute to the active site. The active-site O-(3'-phospho-DNA)-tyrosine intermediate is Y278.

The protein belongs to the 'phage' integrase family. XerC subfamily. In terms of assembly, forms a cyclic heterotetrameric complex composed of two molecules of XerC and two molecules of XerD.

It is found in the cytoplasm. In terms of biological role, site-specific tyrosine recombinase, which acts by catalyzing the cutting and rejoining of the recombining DNA molecules. The XerC-XerD complex is essential to convert dimers of the bacterial chromosome into monomers to permit their segregation at cell division. It also contributes to the segregational stability of plasmids. This Thermodesulfovibrio yellowstonii (strain ATCC 51303 / DSM 11347 / YP87) protein is Tyrosine recombinase XerC.